A 94-amino-acid chain; its full sequence is Na(+)/H(+) antiporter subunit F (94 aa).

The next 3 helical transmembrane spans lie at 2 to 22 (FTLI…LYVI), 34 to 54 (VVAL…VSIL), and 59 to 79 (AFLD…IAFS).

The protein belongs to the CPA3 antiporters (TC 2.A.63) subunit F family. In terms of assembly, forms a heterooligomeric complex that consists of seven subunits: MrpA, MrpB, MrpC, MrpD, MrpE, MrpF and MrpG.

It is found in the cell membrane. In terms of biological role, mrp complex is a Na(+)/H(+) antiporter that is considered to be the major Na(+) excretion system in B.subtilis. Has a major role in Na(+) resistance and a minor role in Na(+)- and K(+)-dependent pH homeostasis as compared to TetB. MrpA may be the actual Na(+)/H(+) antiporter, although the six other Mrp proteins are all required for Na(+)/H(+) antiport activity and Na(+) resistance. MrpA is required for initiation of sporulation when external Na(+) concentration increases. Also transports Li(+) but not K(+), Ca(2+) or Mg(2+). Functionally, involved in cholate and Na(+) efflux activities, which may be mechanistically coupled. Does not require other Mrp proteins for its own function. The sequence is that of Na(+)/H(+) antiporter subunit F (mrpF) from Bacillus subtilis (strain 168).